The chain runs to 634 residues: Threonine--tRNA ligase (634 aa).

Positions 1 to 61 constitute a TGS domain; that stretch reads MINIRFPDGS…NSNCELRLIT (61 aa). The segment at 241 to 532 is catalytic; sequence DHRKIGKVLD…LIEHYAGNLP (292 aa). C332, H383, and H509 together coordinate Zn(2+).

Belongs to the class-II aminoacyl-tRNA synthetase family. As to quaternary structure, homodimer. Zn(2+) is required as a cofactor.

It is found in the cytoplasm. The enzyme catalyses tRNA(Thr) + L-threonine + ATP = L-threonyl-tRNA(Thr) + AMP + diphosphate + H(+). In terms of biological role, catalyzes the attachment of threonine to tRNA(Thr) in a two-step reaction: L-threonine is first activated by ATP to form Thr-AMP and then transferred to the acceptor end of tRNA(Thr). Also edits incorrectly charged L-seryl-tRNA(Thr). The protein is Threonine--tRNA ligase of Francisella tularensis subsp. holarctica (strain OSU18).